A 461-amino-acid polypeptide reads, in one-letter code: MDPRISSRLRALALLVFVISITDGIPNRAKRSSSEINAEIDGLIQQLTTVDADTKGIQETLTELKTTVSANPSRISQVSAVVKSVGSSLAKFKTGDPYNIVSGCLDILSSIATTYNGPYGVGLGAVASLLSSVIGLFAQDGFKNSLKSIVDEAFKRYRDEELQGQLKGASRTFNDVIGTLKNLTDKDTAVTDLEFSLATSSVSVSQFSNMLGIIESRINTGSTTTDLAEAKRTVDFIFLYLELAVMRETLLTQLILFTKKLGKFENYANGISASIDANKQAVHDTILFLHQMEPKNAVCGAYYYPVHHSDVSEGIFTFTRYFGLPDPPRNTFQGVYRVENRYWPAWHICKESYMGNHMFRGCSYIKSAGVHISALDNGYLKLNLKGKNMYITKHAQGWAWGTADNDPGEQGYFIFVPLKSGYYMISTKKWPNYFVYMESSASGYIRSWHNNPGLQGHWKLT.

The first 24 residues, 1 to 24, serve as a signal peptide directing secretion; that stretch reads MDPRISSRLRALALLVFVISITDG. A propeptide spanning residues 25–31 is cleaved from the precursor; the sequence is IPNRAKR.

The protein belongs to the jellyfish toxin family. Type II subfamily. As to quaternary structure, oligomer. In terms of processing, contains 2 disulfide bonds. Nematocytes.

It is found in the secreted. It localises to the nematocyst. Its subcellular location is the target cell membrane. Functionally, the fraction containing this toxin and CfTX-B shows potent hemolytic activity. This fraction causes minor effects on the cardiovascular system of anesthetized rats (at 25 ug/kg), since it has no significant effects on heart rate but produces relatively small increases in mean arterial pressure. The polypeptide is Toxin CfTX-B (Chironex fleckeri (Australian box jellyfish)).